A 127-amino-acid chain; its full sequence is Nuclear transport factor 2 (127 aa).

An NTF2 domain is found at 11-124 (VGKQFVEHYY…FLLINDFFRL (114 aa)).

The protein resides in the cytoplasm. The protein localises to the cytosol. It localises to the nucleus outer membrane. It is found in the nucleus. Its subcellular location is the nuclear pore complex. The protein resides in the nucleus inner membrane. The protein localises to the nucleoplasm. Mediates the import of GDP-bound RAN from the cytoplasm into the nucleus which is essential for the function of RAN in cargo receptor-mediated nucleocytoplasmic transport. Thereby, plays indirectly a more general role in cargo receptor-mediated nucleocytoplasmic transport. Interacts with GDP-bound RAN in the cytosol, recruits it to the nuclear pore complex via its interaction with nucleoporins and promotes its nuclear import. The protein is Nuclear transport factor 2 of Dictyostelium discoideum (Social amoeba).